The sequence spans 443 residues: ATP-dependent protease ATPase subunit HslU (443 aa).

Residues I20, 62 to 67 (GVGKTE), D255, E321, and R393 contribute to the ATP site.

This sequence belongs to the ClpX chaperone family. HslU subfamily. In terms of assembly, a double ring-shaped homohexamer of HslV is capped on each side by a ring-shaped HslU homohexamer. The assembly of the HslU/HslV complex is dependent on binding of ATP.

The protein resides in the cytoplasm. ATPase subunit of a proteasome-like degradation complex; this subunit has chaperone activity. The binding of ATP and its subsequent hydrolysis by HslU are essential for unfolding of protein substrates subsequently hydrolyzed by HslV. HslU recognizes the N-terminal part of its protein substrates and unfolds these before they are guided to HslV for hydrolysis. This Helicobacter pylori (strain P12) protein is ATP-dependent protease ATPase subunit HslU.